The following is a 95-amino-acid chain: HssA/B-like protein 45 (95 aa).

Residues 1 to 31 (MTLFSSISSISNPMTSSKSSIASFGSGTSMS) form a disordered region.

Belongs to the hssA/B family.

This Dictyostelium discoideum (Social amoeba) protein is HssA/B-like protein 45 (hssl45).